Here is a 416-residue protein sequence, read N- to C-terminus: D-amino acid dehydrogenase 2 (416 aa).

An FAD-binding site is contributed by 3–17; the sequence is ITVLGAGVVGTAAAY.

The protein belongs to the DadA oxidoreductase family. It depends on FAD as a cofactor.

It catalyses the reaction a D-alpha-amino acid + A + H2O = a 2-oxocarboxylate + AH2 + NH4(+). Its function is as follows. Oxidative deamination of D-amino acids. The chain is D-amino acid dehydrogenase 2 (dadA2) from Mesorhizobium japonicum (strain LMG 29417 / CECT 9101 / MAFF 303099) (Mesorhizobium loti (strain MAFF 303099)).